A 288-amino-acid chain; its full sequence is 11-beta-hydroxysteroid dehydrogenase 1 (288 aa).

The Cytoplasmic portion of the chain corresponds to 1–4; that stretch reads MKKY. A helical; Signal-anchor for type II membrane protein transmembrane segment spans residues 5–20; the sequence is LLPVLVLCLGYYYSTN. At 21–288 the chain is on the lumenal side; that stretch reads EEFRPEMLQG…SYNRDLFVSN (268 aa). NADP(+) contacts are provided by residues 37–63, 88–89, and 115–117; these read GASK…TARS, TM, and NHI. Asn-158 carries an N-linked (GlcNAc...) asparagine glycan. Ser-166 lines the substrate pocket. Catalysis depends on Tyr-179, which acts as the Proton acceptor. 179 to 183 is an NADP(+) binding site; the sequence is YSASK. Asn-203 carries an N-linked (GlcNAc...) asparagine glycan. NADP(+) contacts are provided by residues 212 to 218 and 214 to 218; these read GFIDTET and IDTET.

This sequence belongs to the short-chain dehydrogenases/reductases (SDR) family. Homodimer. Glycosylated. As to expression, liver, kidney, lung and testis. Brain. Expressed in liver (at protein level).

The protein localises to the endoplasmic reticulum membrane. It carries out the reaction an 11beta-hydroxysteroid + NADP(+) = an 11-oxosteroid + NADPH + H(+). It catalyses the reaction corticosterone + NADP(+) = 11-dehydrocorticosterone + NADPH + H(+). The catalysed reaction is a 7beta-hydroxysteroid + NADP(+) = a 7-oxosteroid + NADPH + H(+). The enzyme catalyses 7-oxocholesterol + NADPH + H(+) = 7beta-hydroxycholesterol + NADP(+). It carries out the reaction chenodeoxycholate + NADP(+) = 7-oxolithocholate + NADPH + H(+). It catalyses the reaction 7-oxolithocholate + NADPH + H(+) = ursodeoxycholate + NADP(+). The catalysed reaction is glycochenodeoxycholate + NADP(+) = 7-oxoglycolithocholate + NADPH + H(+). The enzyme catalyses taurochenodeoxycholate + NADP(+) = 7-oxotaurolithocholate + NADPH + H(+). It carries out the reaction tauroursodeoxycholate + NADP(+) = 7-oxotaurolithocholate + NADPH + H(+). It catalyses the reaction glycoursodeoxycholate + NADP(+) = 7-oxoglycolithocholate + NADPH + H(+). The catalysed reaction is 7-oxopregnenolone + NADPH + H(+) = 7beta-hydroxypregnenolone + NADP(+). The enzyme catalyses 3beta,7alpha-dihydroxyandrost-5-en-17-one + NADP(+) = 3beta-hydroxy-5-androstene-7,17-dione + NADPH + H(+). It carries out the reaction 3beta-hydroxy-5-androstene-7,17-dione + NADPH + H(+) = 3beta,7beta-dihydroxyandrost-5-en-17-one + NADP(+). It catalyses the reaction 3beta-hydroxy-5alpha-androstane-7,17-dione + NADPH + H(+) = 3beta,7beta-dihydroxy-5alpha-androstan-17-one + NADP(+). In terms of biological role, controls the reversible conversion of biologically active glucocorticoids such as 11-dehydrocorticosterone to corticosterone using NADP(H). Participates in the corticosteroid receptor-mediated anti-inflammatory response, as well as metabolic and homeostatic processes. Bidirectional in vitro, predominantly functions as a reductase in vivo, thereby increasing the concentration of active glucocorticoids. It has broad substrate specificity, besides glucocorticoids, it accepts other steroid and sterol substrates. Interconverts 7-oxo- and 7-hydroxy-neurosteroids such as 7-oxopregnenolone and 7beta-hydroxypregnenolone, 7-oxodehydroepiandrosterone (3beta-hydroxy-5-androstene-7,17-dione) and 7beta-hydroxydehydroepiandrosterone (3beta,7beta-dihydroxyandrost-5-en-17-one), among others. Catalyzes the stereo-specific conversion of the major dietary oxysterol, 7-ketocholesterol (7-oxocholesterol), into the more polar 7-beta-hydroxycholesterol metabolite. 7-oxocholesterol is one of the most important oxysterols, it participates in several events such as induction of apoptosis, accumulation in atherosclerotic lesions, lipid peroxidation, and induction of foam cell formation. Mediates the 7-oxo reduction of 7-oxolithocholate mainly to chenodeoxycholate, and to a lesser extent to ursodeoxycholate, both in its free form and when conjugated to glycine or taurine, providing a link between glucocorticoid activation and bile acid metabolism. Catalyzes the synthesis of 7-beta-25-dihydroxycholesterol from 7-oxo-25-hydroxycholesterol in vitro, which acts as a ligand for the G-protein-coupled receptor (GPCR) Epstein-Barr virus-induced gene 2 (EBI2) and may thereby regulate immune cell migration. The protein is 11-beta-hydroxysteroid dehydrogenase 1 of Rattus norvegicus (Rat).